Reading from the N-terminus, the 73-residue chain is Conotoxin ArMKLT2-022 (73 aa).

Residues Met1–Gly22 form the signal peptide. The propeptide occupies Glu23–Arg40. Gln41 is modified (pyrrolidone carboxylic acid). 3 cysteine pairs are disulfide-bonded: Cys42–Cys56, Cys49–Cys60, and Cys55–Cys67.

This sequence belongs to the conotoxin O1 superfamily. In terms of tissue distribution, expressed by the venom duct.

It localises to the secreted. The sequence is that of Conotoxin ArMKLT2-022 from Conus arenatus (Sand-dusted cone).